Consider the following 502-residue polypeptide: Glycerol kinase (502 aa).

ADP is bound at residue T14. ATP is bound by residues T14, T15, and S16. T14 serves as a coordination point for sn-glycerol 3-phosphate. ADP is bound at residue R18. R84, E85, Y136, and D246 together coordinate sn-glycerol 3-phosphate. Residues R84, E85, Y136, D246, and Q247 each coordinate glycerol. Positions 268 and 311 each coordinate ADP. Positions 268, 311, 315, and 412 each coordinate ATP. G412 and N416 together coordinate ADP.

Belongs to the FGGY kinase family. As to quaternary structure, homotetramer and homodimer (in equilibrium). Heterodimer with EIIA-Glc. Binds 1 zinc ion per glycerol kinase EIIA-Glc dimer. The zinc ion is important for dimerization.

It carries out the reaction glycerol + ATP = sn-glycerol 3-phosphate + ADP + H(+). It functions in the pathway polyol metabolism; glycerol degradation via glycerol kinase pathway; sn-glycerol 3-phosphate from glycerol: step 1/1. Its activity is regulated as follows. Activity of this regulatory enzyme is affected by several metabolites. Allosterically and non-competitively inhibited by fructose 1,6-bisphosphate (FBP) and unphosphorylated phosphocarrier protein EIIA-Glc (III-Glc), an integral component of the bacterial phosphotransferase (PTS) system. Functionally, key enzyme in the regulation of glycerol uptake and metabolism. Catalyzes the phosphorylation of glycerol to yield sn-glycerol 3-phosphate. In Escherichia coli O8 (strain IAI1), this protein is Glycerol kinase.